Here is a 227-residue protein sequence, read N- to C-terminus: Uracil-DNA glycosylase (227 aa).

Catalysis depends on Asp65, which acts as the Proton acceptor.

Belongs to the uracil-DNA glycosylase (UDG) superfamily. UNG family.

Its subcellular location is the cytoplasm. The enzyme catalyses Hydrolyzes single-stranded DNA or mismatched double-stranded DNA and polynucleotides, releasing free uracil.. Its function is as follows. Excises uracil residues from the DNA which can arise as a result of misincorporation of dUMP residues by DNA polymerase or due to deamination of cytosine. The polypeptide is Uracil-DNA glycosylase (Buchnera aphidicola subsp. Cinara cedri (strain Cc)).